Consider the following 223-residue polypeptide: Neurotrophic factor BDNF precursor form (223 aa).

Residues 1–5 (SCMKA) form the signal peptide. Positions 6–114 (APMKEVSIRG…AANMSMRVRR (109 aa)) are excised as a propeptide. An N-linked (GlcNAc...) asparagine glycan is attached at N107. Cystine bridges form between C127–C194 and C172–C223.

The protein belongs to the NGF-beta family.

The protein localises to the secreted. In terms of biological role, promotes the survival of neuronal populations that are all located either in the central nervous system or directly connected to it. This is Neurotrophic factor BDNF precursor form (BDNF) from Aspidites melanocephalus (Black-headed python).